Here is a 95-residue protein sequence, read N- to C-terminus: Integration host factor subunit beta (95 aa).

The protein belongs to the bacterial histone-like protein family. Heterodimer of an alpha and a beta chain.

Its function is as follows. This protein is one of the two subunits of integration host factor, a specific DNA-binding protein that functions in genetic recombination as well as in transcriptional and translational control. The protein is Integration host factor subunit beta of Paracoccus denitrificans (strain Pd 1222).